Here is a 196-residue protein sequence, read N- to C-terminus: uncharacterized protein (196 aa).

This is an uncharacterized protein from Mycoplasma pneumoniae (strain ATCC 29342 / M129 / Subtype 1) (Mycoplasmoides pneumoniae).